Reading from the N-terminus, the 1327-residue chain is Kinectin (1327 aa).

Over 1–8 the chain is Cytoplasmic; sequence MELYESTY. The helical; Signal-anchor for type II membrane protein transmembrane segment at 9 to 29 threads the bilayer; sequence FIVLIPSVVITVIFLFFWLFM. The Lumenal segment spans residues 30-1327; that stretch reads KETLYDEVLA…EVNQQLTKET (1298 aa). Disordered regions lie at residues 49 to 181 and 197 to 216; these read STKT…EQDK and LSHQDTKQEGGLGKKKGLSK. Asn-69 is a glycosylation site (N-linked (GlcNAc...) asparagine). Basic and acidic residues-rich tracts occupy residues 73–86 and 111–135; these read RESDSEHVPRDFKL and VRERQKKEKKQKPSLEEQVIKESDA. 2 positions are modified to phosphoserine: Ser-75 and Ser-77. A compositionally biased stretch (basic residues) spans 163-173; the sequence is LKKKAGQKKSK. Positions 329 to 1327 form a coiled coil; sequence ELSGLLHQLQ…EVNQQLTKET (999 aa). Residue Asn-1031 is glycosylated (N-linked (GlcNAc...) asparagine). At Ser-1060 the chain carries Phosphoserine. N-linked (GlcNAc...) asparagine glycosylation is present at Asn-1066. Ser-1290 is subject to Phosphoserine.

This sequence belongs to the kinectin family. Expressed in all tissues examined including 12-day embryo, adult heart, brain, ovary, kidney, lung, small intestine, spleen, thymus and pancreas.

Its subcellular location is the endoplasmic reticulum membrane. Receptor for kinesin thus involved in kinesin-driven vesicle motility. Accumulates in integrin-based adhesion complexes (IAC) upon integrin aggregation by fibronectin. The sequence is that of Kinectin from Mus musculus (Mouse).